The sequence spans 320 residues: MTTPFKMERGVKYRDAAKTSIIPVKNIDPNQELLKKPEWMKIKLPANSAKINSIKNGMRRHGLHSVCEEASCPNLHECFNHGTATFMILGAICTRRCPFCDVAHGKPLPPDPDEPKKLAETIQDMKLRYVVITSVDRDDLPDRGAGHFAECVKEIRKLNPGIKIEILVPDFRGRIEQALEKLKDNPPDVFNHNLENVPRLYREIRPGADYNWSLKLLKEFKTIFPHIPTKSGIMVGLGETNEEILQVMQDLRDNGVTMLTLGQYLQPSRHHLPVARYVPPEEFDDFRDKAEKMGFEHAACGPFVRSSYHADLQASGGLVK.

[4Fe-4S] cluster-binding residues include C67, C72, C78, C93, C97, C100, and S307. The 218-residue stretch at 79–296 (FNHGTATFMI…RDKAEKMGFE (218 aa)) folds into the Radical SAM core domain.

Belongs to the radical SAM superfamily. Lipoyl synthase family. Requires [4Fe-4S] cluster as cofactor.

It localises to the cytoplasm. The catalysed reaction is [[Fe-S] cluster scaffold protein carrying a second [4Fe-4S](2+) cluster] + N(6)-octanoyl-L-lysyl-[protein] + 2 oxidized [2Fe-2S]-[ferredoxin] + 2 S-adenosyl-L-methionine + 4 H(+) = [[Fe-S] cluster scaffold protein] + N(6)-[(R)-dihydrolipoyl]-L-lysyl-[protein] + 4 Fe(3+) + 2 hydrogen sulfide + 2 5'-deoxyadenosine + 2 L-methionine + 2 reduced [2Fe-2S]-[ferredoxin]. It participates in protein modification; protein lipoylation via endogenous pathway; protein N(6)-(lipoyl)lysine from octanoyl-[acyl-carrier-protein]: step 2/2. Functionally, catalyzes the radical-mediated insertion of two sulfur atoms into the C-6 and C-8 positions of the octanoyl moiety bound to the lipoyl domains of lipoate-dependent enzymes, thereby converting the octanoylated domains into lipoylated derivatives. The protein is Lipoyl synthase of Histophilus somni (strain 129Pt) (Haemophilus somnus).